Here is an 819-residue protein sequence, read N- to C-terminus: Metabotropic glutamate receptor-like protein O (819 aa).

An N-terminal signal peptide occupies residues 1 to 19; that stretch reads MKKVFFLILILNCVVGALS. At 20–394 the chain is on the extracellular side; the sequence is NKNICKISLL…FVDSYSNSIK (375 aa). N-linked (GlcNAc...) asparagine glycosylation is found at Asn-99, Asn-185, Asn-277, Asn-295, Asn-330, and Asn-370. Residues 395–415 form a helical membrane-spanning segment; the sequence is ISILSVSIFCIFICVLGMIFI. At 416-428 the chain is on the cytoplasmic side; that stretch reads TVLRNARILKSSS. A helical transmembrane segment spans residues 429-449; the sequence is PSFLLLILFGCIVIFTGCILF. Over 450–457 the chain is Extracellular; it reads SQPATDKT. A helical membrane pass occupies residues 458–478; it reads CQGRVWLLSIGYTIFLGSLLI. Over 479–503 the chain is Cytoplasmic; sequence KNWRVWLLFDNKKLRKRSITNWKLY. Residues 504–524 form a helical membrane-spanning segment; it reads PWVAGILVVDVLILALWQGLG. Over 525 to 550 the chain is Extracellular; sequence DIKSESRIIGTSFYQYTNVCTNNDQG. A helical membrane pass occupies residues 551–571; the sequence is SIALYILLAFHGLKLLGTCFI. The Cytoplasmic segment spans residues 572-587; it reads SFKIKLVDIEEFNESK. Residues 588 to 608 traverse the membrane as a helical segment; it reads PITTSVFIILFCIFTIILLIA. The Extracellular portion of the chain corresponds to 609–624; it reads PSSSSSSASSPQPIAS. Residues 625–645 traverse the membrane as a helical segment; that stretch reads LETIICICSVTTTAISIGLLF. The Cytoplasmic portion of the chain corresponds to 646–819; it reads GDKIYFITTQ…NNENEIISDT (174 aa). Residues 674–819 form a disordered region; sequence KDCDDDDDDS…NNENEIISDT (146 aa). Positions 695-712 are enriched in basic residues; sequence NKNKNKNRNQSEKKKRPN. Polar residues predominate over residues 726-739; the sequence is ESVVFNPPSNNDLT. The span at 748 to 768 shows a compositional bias: basic and acidic residues; that stretch reads GIKEGHGHDSENNDEYEHHED. The segment covering 769–798 has biased composition (acidic residues); the sequence is EDHEYEGEGEDEDHEDEYEVENDIEQEQEQ. The span at 799-808 shows a compositional bias: low complexity; sequence ESSNISISTK.

This sequence in the N-terminal section; belongs to the BMP lipoprotein family. The protein in the C-terminal section; belongs to the G-protein coupled receptor 3 family. GABA-B receptor subfamily.

It localises to the membrane. In Dictyostelium discoideum (Social amoeba), this protein is Metabotropic glutamate receptor-like protein O (grlO).